The following is a 743-amino-acid chain: Polyribonucleotide nucleotidyltransferase (743 aa).

Asp489 and Asp495 together coordinate Mg(2+). A KH domain is found at 556–618; sequence PRIEKMHIGK…PCIDAAIGMI (63 aa). An S1 motif domain is found at 628–698; that stretch reads GETYPGKITS…KTGKFKLSRK (71 aa). Positions 704–743 are disordered; sequence PEGYVEPQPRERRERREGGREGGRNFERRGGDRDHREPRG.

The protein belongs to the polyribonucleotide nucleotidyltransferase family. Requires Mg(2+) as cofactor.

The protein localises to the cytoplasm. The enzyme catalyses RNA(n+1) + phosphate = RNA(n) + a ribonucleoside 5'-diphosphate. Its function is as follows. Involved in mRNA degradation. Catalyzes the phosphorolysis of single-stranded polyribonucleotides processively in the 3'- to 5'-direction. This Porphyromonas gingivalis (strain ATCC 33277 / DSM 20709 / CIP 103683 / JCM 12257 / NCTC 11834 / 2561) protein is Polyribonucleotide nucleotidyltransferase.